Reading from the N-terminus, the 105-residue chain is Small ribosomal subunit protein uS10 (105 aa).

It belongs to the universal ribosomal protein uS10 family. Part of the 30S ribosomal subunit.

Functionally, involved in the binding of tRNA to the ribosomes. This chain is Small ribosomal subunit protein uS10, found in Cyanothece sp. (strain PCC 7425 / ATCC 29141).